The following is a 270-amino-acid chain: Basigin (270 aa).

An N-terminal signal peptide occupies residues 1-21; the sequence is MAAVLFALLALALLRAGGASA. The region spanning 22–103 is the Ig-like C2-type domain; that stretch reads AAGTVTTSVQ…TGEATLTVDG (82 aa). The Extracellular segment spans residues 22–207; sequence AAGTVTTSVQ…VTLRVRSRLA (186 aa). Intrachain disulfides connect Cys-41/Cys-87 and Cys-126/Cys-185. 4 N-linked (GlcNAc...) asparagine glycosylation sites follow: Asn-44, Asn-75, Asn-152, and Asn-186. One can recognise an Ig-like V-type domain in the interval 105–203; the sequence is PRIKAVKKSE…DAAVVTLRVR (99 aa). Residues 208–228 form a helical membrane-spanning segment; sequence ALWPFLGIVAEVLVLVTVIFI. The Cytoplasmic portion of the chain corresponds to 229–270; that stretch reads YEKRRKPDEVLDDEDAGAAPLKSSGHHVNDDKGKNVRQRNAS. The interval 239–270 is disordered; that stretch reads LDDEDAGAAPLKSSGHHVNDDKGKNVRQRNAS. Ser-252 is modified (phosphoserine).

As to quaternary structure, homooligomer. Interacts with VEGFA, KDR/VEGFR2, PPIA/CYPA, SLC1A3, SLC16A12, SLC16A11, ATP1B2, MAG, L1CAM and AJAP1. Interacts with PPIL2; regulates BSG transport to the cell membrane. Interacts with XKR8; promoting its localization at the cell membrane. Interacts with SLC16A3; interaction mediates SLC16A3 targeting to the plasma membrane. Interacts with SLC16A1; interaction mediates SLC16A1 targeting to the plasma membrane. Interacts with SLC16A6; this interaction mediates targeting to the plasma membrane.

Its subcellular location is the cell membrane. The protein resides in the endoplasmic reticulum membrane. It is found in the basolateral cell membrane. Functionally, signaling receptor for cyclophilins, essential for PPIA/CYPA and PPIB/CYPB-dependent signaling related to chemotaxis and adhesion of immune cells. Plays an important role in targeting the monocarboxylate transporters SLC16A1/GLUT1, SLC16A3, SLC16A8, SLC16A11 and SLC16A12 to the plasma membrane. Acts as a coreceptor for vascular endothelial growth factor receptor 2 (KDR/VEGFR2) in endothelial cells enhancing its VEGFA-mediated activation and downstream signaling. Promotes angiogenesis through EPAS1/HIF2A-mediated up-regulation of VEGFA and KDR/VEGFR2 in endothelial cells. The sequence is that of Basigin (BSG) from Oryctolagus cuniculus (Rabbit).